Reading from the N-terminus, the 148-residue chain is Cytochrome c-type biogenesis protein CcmE (148 aa).

Topologically, residues 1–7 (MTRKQRR) are cytoplasmic. Residues 8–28 (LYFVLLGMAALGGAVALVLTA) form a helical; Signal-anchor for type II membrane protein membrane-spanning segment. Residues 29–148 (ISDSLVYFYS…QWNDGKQPKQ (120 aa)) lie on the Periplasmic side of the membrane. Heme-binding residues include histidine 121 and tyrosine 125.

Belongs to the CcmE/CycJ family.

It is found in the cell inner membrane. In terms of biological role, heme chaperone required for the biogenesis of c-type cytochromes. Transiently binds heme delivered by CcmC and transfers the heme to apo-cytochromes in a process facilitated by CcmF and CcmH. This is Cytochrome c-type biogenesis protein CcmE from Paramagnetospirillum magneticum (strain ATCC 700264 / AMB-1) (Magnetospirillum magneticum).